A 223-amino-acid chain; its full sequence is Probable Brix domain-containing ribosomal biogenesis protein (223 aa).

The region spanning 1 to 196 (MMLITTSHRP…IWIMEDGRRW (196 aa)) is the Brix domain.

Probably involved in the biogenesis of the ribosome. The polypeptide is Probable Brix domain-containing ribosomal biogenesis protein (Pyrococcus furiosus (strain ATCC 43587 / DSM 3638 / JCM 8422 / Vc1)).